Consider the following 346-residue polypeptide: Uricase (346 aa).

Residues Met-1–Gly-23 are disordered. Catalysis depends on charge relay system residues Lys-39 and Thr-84. The urate site is built by Thr-84, Asp-85, Phe-208, Arg-225, Val-273, Gln-274, and Asn-300. His-302 functions as the Charge relay system in the catalytic mechanism. The short motif at Ser-344–Leu-346 is the Microbody targeting signal element.

It belongs to the uricase family. Malpighian tubules.

The protein localises to the peroxisome. The catalysed reaction is urate + O2 + H2O = 5-hydroxyisourate + H2O2. Its pathway is purine metabolism; urate degradation; (S)-allantoin from urate: step 1/3. Its activity is regulated as follows. Repressed by 20-hydroxyecdysone. Catalyzes the oxidation of uric acid to 5-hydroxyisourate, which is further processed to form (S)-allantoin. This is Uricase (Uro) from Drosophila pseudoobscura pseudoobscura (Fruit fly).